The following is a 483-amino-acid chain: Probable glycine dehydrogenase (decarboxylating) subunit 2 (483 aa).

A disordered region spans residues 1–33; the sequence is MLIFEHSRKNRRNYSQAPATRPAKNNIPDHLKR. K264 carries the N6-(pyridoxal phosphate)lysine modification.

Belongs to the GcvP family. C-terminal subunit subfamily. The glycine cleavage system is composed of four proteins: P, T, L and H. In this organism, the P 'protein' is a heterodimer of two subunits. Pyridoxal 5'-phosphate is required as a cofactor.

It carries out the reaction N(6)-[(R)-lipoyl]-L-lysyl-[glycine-cleavage complex H protein] + glycine + H(+) = N(6)-[(R)-S(8)-aminomethyldihydrolipoyl]-L-lysyl-[glycine-cleavage complex H protein] + CO2. Its function is as follows. The glycine cleavage system catalyzes the degradation of glycine. The P protein binds the alpha-amino group of glycine through its pyridoxal phosphate cofactor; CO(2) is released and the remaining methylamine moiety is then transferred to the lipoamide cofactor of the H protein. This Nitrosomonas europaea (strain ATCC 19718 / CIP 103999 / KCTC 2705 / NBRC 14298) protein is Probable glycine dehydrogenase (decarboxylating) subunit 2.